Reading from the N-terminus, the 334-residue chain is MQKKVIAAIIGTSAISAVAATQANAATTHTVKPGESVWAISNKYGISIAKLKSLNNLTSNLIFPNQVLKVSGSSNSTSNSSRPSTNSGGGSYYTVQAGDSLSLIASKYGTTYQNIMRLNGLNNFFIYPGQKLKVSGTASSSNAASNSSRPSTNSGGGSYYTVQAGDSLSLIASKYGTTYQKIMSLNGLNNFFIYPGQKLKVTGNASTNSGSATTTNRGYNTPVFSHQNLYTWGQCTYHVFNRRAEIGKGISTYWWNANNWDNAAAADGYTIDNRPTVGSIAQTDVGYYGHVMFVERVNNDGSILVSEMNYSAAPGILTYRTVPAYQVNNYRYIH.

The N-terminal stretch at 1–25 (MQKKVIAAIIGTSAISAVAATQANA) is a signal peptide. Residues 27-70 (TTHTVKPGESVWAISNKYGISIAKLKSLNNLTSNLIFPNQVLKV) enclose the LysM 1 domain. Positions 71–86 (SGSSNSTSNSSRPSTN) are enriched in low complexity. The interval 71–90 (SGSSNSTSNSSRPSTNSGGG) is disordered. LysM domains are found at residues 91-134 (SYYT…KLKV) and 158-201 (SYYT…KLKV). A Peptidase C51 domain is found at 210–334 (GSATTTNRGY…YQVNNYRYIH (125 aa)).

The protein resides in the secreted. It localises to the cell surface. The catalysed reaction is Hydrolyzes the link between N-acetylmuramoyl residues and L-amino acid residues in certain cell-wall glycopeptides.. Functionally, peptidoglycan hydrolase involved in the splitting of the septum during cell division. The polypeptide is N-acetylmuramoyl-L-alanine amidase sle1 (sle1) (Staphylococcus aureus (strain USA300)).